Here is a 154-residue protein sequence, read N- to C-terminus: N-acetylneuraminate anomerase NanQ (154 aa).

It belongs to the NanQ anomerase family. Requires Zn(2+) as cofactor.

Its subcellular location is the cytoplasm. The catalysed reaction is N-acetyl-alpha-neuraminate = aceneuramate. It carries out the reaction N-acetyl-beta-neuraminate = aceneuramate. Its activity is regulated as follows. Inhibited by 1,10-phenanthroline. Opens both the alpha- and beta-forms of N-acetylneuraminate (sialic acid; Neu5Ac) to provide aceneuramate, the preferred substrate for NanA. Has preferential activity on the beta-anomer rather than the alpha-anomer. Accelerates a reaction that is spontaneous at slightly alkaline pH, facilitates the reaction at acidic pH. The polypeptide is N-acetylneuraminate anomerase NanQ (Escherichia coli (strain K12)).